The chain runs to 271 residues: Large ribosomal subunit protein uL15c (271 aa).

Disordered regions lie at residues 1 to 21 (MASL…NNYP) and 66 to 120 (SNVS…QKSR). The N-terminal 61 residues, 1 to 61 (MASLLSLSST…KESTRLVVVA (61 aa)), are a transit peptide targeting the chloroplast. Residues 66-76 (SNVSPSIGSGS) show a composition bias toward low complexity. A compositionally biased stretch (basic residues) spans 91-101 (SRKKGKRKGRG). The segment covering 102–114 (HAAGQGGSCGFGM) has biased composition (gly residues).

As to quaternary structure, component of the chloroplast large ribosomal subunit (LSU). Mature 70S chloroplast ribosomes of higher plants consist of a small (30S) and a large (50S) subunit. The 30S small subunit contains 1 molecule of ribosomal RNA (16S rRNA) and 24 different proteins. The 50S large subunit contains 3 rRNA molecules (23S, 5S and 4.5S rRNA) and 33 different proteins.

The protein resides in the plastid. It is found in the chloroplast. Functionally, component of the chloroplast ribosome (chloro-ribosome), a dedicated translation machinery responsible for the synthesis of chloroplast genome-encoded proteins, including proteins of the transcription and translation machinery and components of the photosynthetic apparatus. The chain is Large ribosomal subunit protein uL15c (RPL15) from Spinacia oleracea (Spinach).